We begin with the raw amino-acid sequence, 696 residues long: Elongation factor G (696 aa).

One can recognise a tr-type G domain in the interval 8–290 (ERYRNIGIMA…AVLDYLPSPL (283 aa)). GTP is bound by residues 17–24 (AHIDAGKT), 88–92 (DTPGH), and 142–145 (NKMD).

Belongs to the TRAFAC class translation factor GTPase superfamily. Classic translation factor GTPase family. EF-G/EF-2 subfamily.

The protein resides in the cytoplasm. Its function is as follows. Catalyzes the GTP-dependent ribosomal translocation step during translation elongation. During this step, the ribosome changes from the pre-translocational (PRE) to the post-translocational (POST) state as the newly formed A-site-bound peptidyl-tRNA and P-site-bound deacylated tRNA move to the P and E sites, respectively. Catalyzes the coordinated movement of the two tRNA molecules, the mRNA and conformational changes in the ribosome. In Nitrosomonas europaea (strain ATCC 19718 / CIP 103999 / KCTC 2705 / NBRC 14298), this protein is Elongation factor G.